The following is a 435-amino-acid chain: Serine--tRNA ligase (435 aa).

240–242 (TAE) provides a ligand contact to L-serine. 271-273 (RSE) lines the ATP pocket. Glu294 lines the L-serine pocket. ATP is bound at residue 358–361 (EISS). Ser393 lines the L-serine pocket.

It belongs to the class-II aminoacyl-tRNA synthetase family. Type-1 seryl-tRNA synthetase subfamily. As to quaternary structure, homodimer. The tRNA molecule binds across the dimer.

The protein resides in the cytoplasm. The catalysed reaction is tRNA(Ser) + L-serine + ATP = L-seryl-tRNA(Ser) + AMP + diphosphate + H(+). The enzyme catalyses tRNA(Sec) + L-serine + ATP = L-seryl-tRNA(Sec) + AMP + diphosphate + H(+). It participates in aminoacyl-tRNA biosynthesis; selenocysteinyl-tRNA(Sec) biosynthesis; L-seryl-tRNA(Sec) from L-serine and tRNA(Sec): step 1/1. Functionally, catalyzes the attachment of serine to tRNA(Ser). Is also able to aminoacylate tRNA(Sec) with serine, to form the misacylated tRNA L-seryl-tRNA(Sec), which will be further converted into selenocysteinyl-tRNA(Sec). The sequence is that of Serine--tRNA ligase from Cupriavidus metallidurans (strain ATCC 43123 / DSM 2839 / NBRC 102507 / CH34) (Ralstonia metallidurans).